The primary structure comprises 498 residues: NAD(P)H-quinone oxidoreductase chain 4, chloroplastic (498 aa).

The next 14 helical transmembrane spans lie at 4–24, 37–57, 80–100, 112–129, 134–154, 167–187, 208–228, 242–262, 272–292, 305–325, 330–350, 386–406, 416–436, and 463–483; these read FPWLTTVVVLPIVGGSLIVLF, YCICFIDLLLIAYVFCYHFEL, FGIDGLSLGPILLTGFITTLA, KLFYFLMLAMYSGQLGTF, ILLFFIMWELELIPVYLLLSM, FILYTAGSSVFLLLGILGMSL, ALEIIFYMGFLIAFAVKSPII, HYSTCMLLAGILLKMGAYGLV, AHSIFCPWLMLLGSIQIIYAA, IAYSSVSHMGFLILGIGSISE, GAILQIISHGFIGAALFFLAG, LALPGMSGFVAELIVLLGIIT, ILITFVTAIGMILTPIYSLSI, and FISISILIPVISIGIYPDFIF.

The protein belongs to the complex I subunit 4 family.

The protein resides in the plastid. The protein localises to the chloroplast thylakoid membrane. It carries out the reaction a plastoquinone + NADH + (n+1) H(+)(in) = a plastoquinol + NAD(+) + n H(+)(out). The catalysed reaction is a plastoquinone + NADPH + (n+1) H(+)(in) = a plastoquinol + NADP(+) + n H(+)(out). This Phaseolus vulgaris (Kidney bean) protein is NAD(P)H-quinone oxidoreductase chain 4, chloroplastic.